We begin with the raw amino-acid sequence, 312 residues long: Ribosomal protein L11 methyltransferase (312 aa).

Residues threonine 160, glycine 181, aspartate 203, and asparagine 246 each coordinate S-adenosyl-L-methionine.

Belongs to the methyltransferase superfamily. PrmA family.

It localises to the cytoplasm. It carries out the reaction L-lysyl-[protein] + 3 S-adenosyl-L-methionine = N(6),N(6),N(6)-trimethyl-L-lysyl-[protein] + 3 S-adenosyl-L-homocysteine + 3 H(+). Methylates ribosomal protein L11. This chain is Ribosomal protein L11 methyltransferase, found in Staphylococcus saprophyticus subsp. saprophyticus (strain ATCC 15305 / DSM 20229 / NCIMB 8711 / NCTC 7292 / S-41).